A 178-amino-acid chain; its full sequence is Interleukin-10 (178 aa).

The N-terminal stretch at 1–18 (MPGSALLCCLLLLTGMRI) is a signal peptide. Residue Asn29 is glycosylated (N-linked (GlcNAc...) asparagine). Disulfide bonds link Cys30–Cys126 and Cys80–Cys132. N-linked (GlcNAc...) asparagine glycosylation is present at Asn134.

This sequence belongs to the IL-10 family. Homodimer. Interacts with IL10RA and IL10RB.

The protein resides in the secreted. Its function is as follows. Major immune regulatory cytokine that acts on many cells of the immune system where it has profound anti-inflammatory functions, limiting excessive tissue disruption caused by inflammation. Mechanistically, IL10 binds to its heterotetrameric receptor comprising IL10RA and IL10RB leading to JAK1 and STAT2-mediated phosphorylation of STAT3. In turn, STAT3 translocates to the nucleus where it drives expression of anti-inflammatory mediators. Targets antigen-presenting cells (APCs) such as macrophages and monocytes and inhibits their release of pro-inflammatory cytokines including granulocyte-macrophage colony-stimulating factor /GM-CSF, granulocyte colony-stimulating factor/G-CSF, IL-1 alpha, IL-1 beta, IL-6, IL-8 and TNF-alpha. Also interferes with antigen presentation by reducing the expression of MHC-class II and co-stimulatory molecules, thereby inhibiting their ability to induce T cell activation. In addition, controls the inflammatory response of macrophages by reprogramming essential metabolic pathways including mTOR signaling. This Mus musculus (Mouse) protein is Interleukin-10 (Il10).